A 120-amino-acid polypeptide reads, in one-letter code: MITKVDRNAVRKKRHARIRKKIFGTAERPRLSVFRSNKHIYAQIIDDTKSSTIVSASTLDKEFGLDSTNNIEAAKKVGELVAKRALEKGIKKVVFDRGGYLYHGRVKALADAAREAGLEF.

This sequence belongs to the universal ribosomal protein uL18 family. In terms of assembly, part of the 50S ribosomal subunit; part of the 5S rRNA/L5/L18/L25 subcomplex. Contacts the 5S and 23S rRNAs.

In terms of biological role, this is one of the proteins that bind and probably mediate the attachment of the 5S RNA into the large ribosomal subunit, where it forms part of the central protuberance. This is Large ribosomal subunit protein uL18 from Geobacillus kaustophilus (strain HTA426).